The chain runs to 253 residues: Small ribosomal subunit protein uS2 (253 aa).

Belongs to the universal ribosomal protein uS2 family.

The polypeptide is Small ribosomal subunit protein uS2 (Hahella chejuensis (strain KCTC 2396)).